Consider the following 151-residue polypeptide: MTIWVDADACPNVIKEILYRAAERMQLPLILVANQALRVPPSRFIRTLRVAAGFDVADNEIVRQCEAGDLVITADIPLAAEVLEKGAAALNPRGERYSDATIRERLTMCDFMDTLRASGVQTGGPNTLSPRDRQHFAAELDKWWLESQRKK.

The protein belongs to the UPF0178 family.

This Salmonella paratyphi C (strain RKS4594) protein is UPF0178 protein YaiI.